Reading from the N-terminus, the 356-residue chain is S-adenosylmethionine:tRNA ribosyltransferase-isomerase (356 aa).

The protein belongs to the QueA family. As to quaternary structure, monomer.

The protein resides in the cytoplasm. It carries out the reaction 7-aminomethyl-7-carbaguanosine(34) in tRNA + S-adenosyl-L-methionine = epoxyqueuosine(34) in tRNA + adenine + L-methionine + 2 H(+). Its pathway is tRNA modification; tRNA-queuosine biosynthesis. In terms of biological role, transfers and isomerizes the ribose moiety from AdoMet to the 7-aminomethyl group of 7-deazaguanine (preQ1-tRNA) to give epoxyqueuosine (oQ-tRNA). In Escherichia coli O6:H1 (strain CFT073 / ATCC 700928 / UPEC), this protein is S-adenosylmethionine:tRNA ribosyltransferase-isomerase.